Consider the following 305-residue polypeptide: UDP-N-acetylenolpyruvoylglucosamine reductase (305 aa).

The FAD-binding PCMH-type domain maps to 22 to 190 (KVGGAADFFA…LSARFRLQAG (169 aa)). R169 is a catalytic residue. S220 serves as the catalytic Proton donor. Residue E290 is part of the active site.

The protein belongs to the MurB family. FAD is required as a cofactor.

It is found in the cytoplasm. It catalyses the reaction UDP-N-acetyl-alpha-D-muramate + NADP(+) = UDP-N-acetyl-3-O-(1-carboxyvinyl)-alpha-D-glucosamine + NADPH + H(+). It functions in the pathway cell wall biogenesis; peptidoglycan biosynthesis. In terms of biological role, cell wall formation. The chain is UDP-N-acetylenolpyruvoylglucosamine reductase from Synechococcus sp. (strain RCC307).